The following is a 250-amino-acid chain: Probable transcriptional regulatory protein tll0175 (250 aa).

It belongs to the TACO1 family.

The protein localises to the cytoplasm. The protein is Probable transcriptional regulatory protein tll0175 of Thermosynechococcus vestitus (strain NIES-2133 / IAM M-273 / BP-1).